Consider the following 297-residue polypeptide: ATP synthase F(1) complex subunit gamma, mitochondrial (297 aa).

The N-terminal 25 residues, M1–M25, are a transit peptide targeting the mitochondrion. N6-acetyllysine is present on K39. Position 49 is an N6-succinyllysine (K49). Position 55 is an N6-acetyllysine (K55). K115 bears the N6-acetyllysine; alternate mark. K115 is modified (N6-succinyllysine; alternate). A Phosphoserine modification is found at S146. Residue K154 is modified to N6-acetyllysine; alternate. K154 is subject to N6-succinyllysine; alternate. Position 197 is an N6-acetyllysine (K197). At K270 the chain carries N6-succinyllysine.

It belongs to the ATPase gamma chain family. Component of the ATP synthase complex composed at least of ATP5F1A/subunit alpha, ATP5F1B/subunit beta, ATP5MC1/subunit c (homooctomer), MT-ATP6/subunit a, MT-ATP8/subunit 8, ATP5ME/subunit e, ATP5MF/subunit f, ATP5MG/subunit g, ATP5MK/subunit k, ATP5MJ/subunit j, ATP5F1C/subunit gamma, ATP5F1D/subunit delta, ATP5F1E/subunit epsilon, ATP5PF/subunit F6, ATP5PB/subunit b, ATP5PD/subunit d, ATP5PO/subunit OSCP. ATP synthase complex consists of a soluble F(1) head domain (subunits alpha(3) and beta(3)) - the catalytic core - and a membrane F(0) domain - the membrane proton channel (subunits c, a, 8, e, f, g, k and j). These two domains are linked by a central stalk (subunits gamma, delta, and epsilon) rotating inside the F1 region and a stationary peripheral stalk (subunits F6, b, d, and OSCP). Interacts with FLVCR2; this interaction occurs in the absence of heme and is disrupted upon heme binding.

The protein resides in the mitochondrion inner membrane. In terms of biological role, subunit gamma, of the mitochondrial membrane ATP synthase complex (F(1)F(0) ATP synthase or Complex V) that produces ATP from ADP in the presence of a proton gradient across the membrane which is generated by electron transport complexes of the respiratory chain. ATP synthase complex consist of a soluble F(1) head domain - the catalytic core - and a membrane F(1) domain - the membrane proton channel. These two domains are linked by a central stalk rotating inside the F(1) region and a stationary peripheral stalk. During catalysis, ATP synthesis in the catalytic domain of F(1) is coupled via a rotary mechanism of the central stalk subunits to proton translocation. In vivo, can only synthesize ATP although its ATP hydrolase activity can be activated artificially in vitro. With the central stalk subunit delta, is essential for the biogenesis of F(1) catalytic part of the ATP synthase complex namely in the formation of F1 assembly intermediate. In Pongo abelii (Sumatran orangutan), this protein is ATP synthase F(1) complex subunit gamma, mitochondrial.